Here is a 147-residue protein sequence, read N- to C-terminus: Transcription antitermination protein NusB (147 aa).

It belongs to the NusB family.

In terms of biological role, involved in transcription antitermination. Required for transcription of ribosomal RNA (rRNA) genes. Binds specifically to the boxA antiterminator sequence of the ribosomal RNA (rrn) operons. The chain is Transcription antitermination protein NusB from Teredinibacter turnerae (strain ATCC 39867 / T7901).